The primary structure comprises 227 residues: MTIEDRGDAHVITHSLAKHTLSRLRDTTTEQVSFRKGLVKLGRISGYEIIDGAMETEFTAFETPLTETTGERVTGLDDVVIINVLRAATPFVEGLLKAFPRAKQGVISAGRDEDAGMDADGEFPITVDYVKLPDISEGDTVIVADPMLATGSTMCTVLDHVTDEMPAAGVEDLFVLSAVSAPDGLLRVGDQFPDADLLTVAIDDTLTDDGYIVPGLGDAGDRAFRTT.

Position 36–40 (36–40) interacts with GTP; it reads KGLVK. Residues arginine 86, arginine 111, and 145-153 contribute to the 5-phospho-alpha-D-ribose 1-diphosphate site; that span reads DPMLATGST. Uracil is bound by residues isoleucine 212 and 217 to 219; that span reads GDA. Aspartate 218 is a 5-phospho-alpha-D-ribose 1-diphosphate binding site.

It belongs to the UPRTase family. Requires Mg(2+) as cofactor.

It catalyses the reaction UMP + diphosphate = 5-phospho-alpha-D-ribose 1-diphosphate + uracil. The protein operates within pyrimidine metabolism; UMP biosynthesis via salvage pathway; UMP from uracil: step 1/1. Allosterically activated by GTP. Its function is as follows. Catalyzes the conversion of uracil and 5-phospho-alpha-D-ribose 1-diphosphate (PRPP) to UMP and diphosphate. The polypeptide is Uracil phosphoribosyltransferase (Halobacterium salinarum (strain ATCC 700922 / JCM 11081 / NRC-1) (Halobacterium halobium)).